Consider the following 257-residue polypeptide: Phycoerythrobilin:ferredoxin oxidoreductase (257 aa).

This sequence belongs to the HY2 family.

The catalysed reaction is (3Z)-phycoerythrobilin + oxidized 2[4Fe-4S]-[ferredoxin] = 15,16-dihydrobiliverdin + reduced 2[4Fe-4S]-[ferredoxin] + 2 H(+). Functionally, catalyzes the two-electron reduction of the C2 and C3(1) diene system of 15,16-dihydrobiliverdin. The chain is Phycoerythrobilin:ferredoxin oxidoreductase (pebB) from Synechococcus sp. (strain WH8020).